Consider the following 1187-residue polypeptide: MDCSLLRTLVRRYCAGEENWVDSRTIYVGHKEPPPGAEAYIPQRYPDNRIVSSKYTFWNFIPKNLFEQFRRIANFYFLIIFLVQLIIDTPTSPVTSGLPLFFVITVTAIKQGYEDWLRHKADNAMNQCPVHFIQHGKLVRKQSRKLRVGDIVMVKEDETFPCDLIFLSSNRADGTCHVTTASLDGESSHKTHYAVQDTKGFHTEADVDSLHATIECEQPQPDLYKFVGRINVYNDLNDPVVRPLGSENLLLRGATLKNTEKIFGVAIYTGMETKMALNYQSKSQKRSAVEKSMNTFLIVYLCILVSKALINTVLKYVWQSEPFRDEPWYNEKTESERQRNLFLRAFTDFLAFMVLFNYIIPVSMYVTVEMQKFLGSYFITWDEDMFDEEMGEGPLVNTSDLNEELGQVEYIFTDKTGTLTENNMAFKECCIEGHVYVPHVICNGQVLPDSSGIDMIDSSPGVCGREREELFFRAICLCHTVQVKDDHCGDDVDGPQKSPDAKSCVYISSSPDEVALVEGVQRLGFTYLRLKDNYMEILNRENDIERFELLEVLTFDSVRRRMSVIVKSTTGEIYLFCKGADSSIFPRVIEGKVDQVRSRVERNAVEGLRTLCVAYKRLEPEQYEDACRLLQSAKVALQDREKKLAEAYEQIEKDLVLLGATAVEDRLQEKAADTIEALQKAGIKVWVLTGDKMETASATCYACKLFRRSTQLLELTTKKLEEQSLHDVLFDLSKTVLRCSGSMTRDSFSGLSTDMHDYGLIIDGAALSLIMKPREDGSSSGNYRELFLEICRNCSAVLCCRMAPLQKAQIVKLIKFSKEHPITLAIGDGANDVSMILEAHVGIGVIGKEGRQAARNSDYAIPKFKHLKKMLLVHGHFYYIRISELVQYFFYKNVCFIFPQFLYQFFCGFSQQTLYDTAYLTLYNISFTSLPILLYSLMEQHVGIDVLKRDPTLYRDIAKNALLRWRVFIYWTFLGVFDALVFFFGAYFIFENTTVTINGQMFGNWTFGTLVFTVMVLTVTLKLALDTHYWTWINHFVIWGSLLFYIAFSLLWGGVIWPFLSYQRMYYVFISMLSSGPAWLGIILLVTVGLLPDVLKKVLCRQLWPTATERTQNIQHQDSISEFTPLASLPSWGAQGSRLLAAQCSSPSGRVVCSRWESEECPVLPLHPGLPHKARYGCCRSSLEMPT.

At 1–61 (MDCSLLRTLV…SSKYTFWNFI (61 aa)) the chain is on the cytoplasmic side. The helical transmembrane segment at 62–82 (PKNLFEQFRRIANFYFLIIFL) threads the bilayer. Over 83-88 (VQLIID) the chain is Extracellular. Residues 89-110 (TPTSPVTSGLPLFFVITVTAIK) traverse the membrane as a helical segment. The Cytoplasmic segment spans residues 111-296 (QGYEDWLRHK…SAVEKSMNTF (186 aa)). A helical transmembrane segment spans residues 297-318 (LIVYLCILVSKALINTVLKYVW). The Extracellular segment spans residues 319-349 (QSEPFRDEPWYNEKTESERQRNLFLRAFTDF). The chain crosses the membrane as a helical span at residues 350-372 (LAFMVLFNYIIPVSMYVTVEMQK). Over 373–884 (FLGSYFITWD…GHFYYIRISE (512 aa)) the chain is Cytoplasmic. Asp-414 serves as the catalytic 4-aspartylphosphate intermediate. Asp-414, Lys-415, Thr-416, Glu-513, Phe-555, Lys-578, Arg-609, Thr-689, Gly-690, and Asp-691 together coordinate ATP. A Mg(2+)-binding site is contributed by Asp-414. Thr-416 is a binding site for Mg(2+). Position 740 is a phosphoserine (Ser-740). Residues Arg-801 and Lys-807 each coordinate ATP. Asp-828 is a binding site for Mg(2+). ATP contacts are provided by Asn-831 and Asp-832. Asp-832 contributes to the Mg(2+) binding site. The chain crosses the membrane as a helical span at residues 885-905 (LVQYFFYKNVCFIFPQFLYQF). Over 906–917 (FCGFSQQTLYDT) the chain is Extracellular. Residues 918-937 (AYLTLYNISFTSLPILLYSL) traverse the membrane as a helical segment. Residues 938-967 (MEQHVGIDVLKRDPTLYRDIAKNALLRWRV) are Cytoplasmic-facing. Residues 968 to 989 (FIYWTFLGVFDALVFFFGAYFI) form a helical membrane-spanning segment. The Extracellular portion of the chain corresponds to 990–1003 (FENTTVTINGQMFG). Residues 1004-1026 (NWTFGTLVFTVMVLTVTLKLALD) form a helical membrane-spanning segment. The Cytoplasmic segment spans residues 1027–1032 (THYWTW). The chain crosses the membrane as a helical span at residues 1033–1053 (INHFVIWGSLLFYIAFSLLWG). The Extracellular segment spans residues 1054-1071 (GVIWPFLSYQRMYYVFIS). Residues 1072-1096 (MLSSGPAWLGIILLVTVGLLPDVLK) form a helical membrane-spanning segment. Residues 1097 to 1138 (KVLCRQLWPTATERTQNIQHQDSISEFTPLASLPSWGAQGSR) lie on the Cytoplasmic side of the membrane. Phosphoserine is present on residues Ser-1148 and Ser-1158.

This sequence belongs to the cation transport ATPase (P-type) (TC 3.A.3) family. Type IV subfamily. As to quaternary structure, component of a P4-ATPase flippase complex which consists of a catalytic alpha subunit ATP11A and an accessory beta subunit TMEM30A. The cofactor is Mg(2+). Post-translationally, proteolytically cleaved by CASP3. Widely expressed. Expressed in myoblasts. Expressed in retina, brain, liver, testes and kidney (at protein level). Expressed in the inner ear.

The protein resides in the cell membrane. It localises to the early endosome. The protein localises to the recycling endosome. Its subcellular location is the endoplasmic reticulum membrane. The enzyme catalyses ATP + H2O + phospholipidSide 1 = ADP + phosphate + phospholipidSide 2.. The catalysed reaction is a 1,2-diacyl-sn-glycero-3-phospho-L-serine(out) + ATP + H2O = a 1,2-diacyl-sn-glycero-3-phospho-L-serine(in) + ADP + phosphate + H(+). It catalyses the reaction a 1,2-diacyl-sn-glycero-3-phosphoethanolamine(out) + ATP + H2O = a 1,2-diacyl-sn-glycero-3-phosphoethanolamine(in) + ADP + phosphate + H(+). Catalytic component of a P4-ATPase flippase complex which catalyzes the hydrolysis of ATP coupled to the transport of aminophospholipids, phosphatidylserines (PS) and phosphatidylethanolamines (PE), from the outer to the inner leaflet of the plasma membrane. Does not show flippase activity toward phosphatidylcholine (PC). Contributes to the maintenance of membrane lipid asymmetry with a specific role in morphogenesis of muscle cells. In myoblasts, mediates PS enrichment at the inner leaflet of plasma membrane, triggering PIEZO1-dependent Ca2+ influx and Rho GTPases signal transduction, subsequently leading to the assembly of cortical actomyosin fibers and myotube formation. This is Phospholipid-transporting ATPase IH (Atp11a) from Mus musculus (Mouse).